The following is a 610-amino-acid chain: Membrane protein insertase YidC (610 aa).

Residues 7–27 traverse the membrane as a helical segment; it reads FFITIALSILILALWQVFYLG. A disordered region spans residues 36 to 82; that stretch reads QARIEEQQRQAQQAAQNRQASSSTGDTPQMPANPDSIPGQGDTKAAG. Positions 44–55 are enriched in low complexity; that stretch reads RQAQQAAQNRQA. The next 5 membrane-spanning stretches (helical) occupy residues 358–378, 387–407, 458–478, 510–530, and 546–566; these read FDLL…FYLI, NFGV…FPLA, WPVL…YVTI, TVPH…IMFL, and IFTW…AGLV.

Belongs to the OXA1/ALB3/YidC family. Type 1 subfamily. As to quaternary structure, interacts with the Sec translocase complex via SecD. Specifically interacts with transmembrane segments of nascent integral membrane proteins during membrane integration.

The protein resides in the cell inner membrane. Its function is as follows. Required for the insertion and/or proper folding and/or complex formation of integral membrane proteins into the membrane. Involved in integration of membrane proteins that insert both dependently and independently of the Sec translocase complex, as well as at least some lipoproteins. Aids folding of multispanning membrane proteins. In Brucella melitensis biotype 1 (strain ATCC 23456 / CCUG 17765 / NCTC 10094 / 16M), this protein is Membrane protein insertase YidC.